The primary structure comprises 354 residues: Petrobactin import system permease protein FatC (354 aa).

Helical transmembrane passes span Tyr37–Val57, Ile77–Phe97, Leu116–Phe136, Ser141–Leu161, Leu168–Phe188, Pro214–His234, Val259–Pro279, Tyr302–Met322, and Gln329–Leu349.

This sequence belongs to the binding-protein-dependent transport system permease family. FecCD subfamily. In terms of assembly, the complex is composed of two ATP-binding proteins (FatE), two transmembrane proteins (FatC and FatD) and a solute-binding protein (FpuA).

It is found in the cell membrane. Its function is as follows. Part of an ABC transporter complex involved in ferric-petrobactin uptake. Probably responsible for the translocation of the substrate across the membrane. This chain is Petrobactin import system permease protein FatC, found in Bacillus anthracis.